The following is a 234-amino-acid chain: Carbohydrate deacetylase (234 aa).

2 residues coordinate Mg(2+): His60 and His123.

The protein belongs to the YdjC deacetylase family. Requires Mg(2+) as cofactor.

Probably catalyzes the deacetylation of acetylated carbohydrates an important step in the degradation of oligosaccharides. This Bacillus anthracis protein is Carbohydrate deacetylase.